Consider the following 686-residue polypeptide: Glycine--tRNA ligase beta subunit (686 aa).

It belongs to the class-II aminoacyl-tRNA synthetase family. As to quaternary structure, tetramer of two alpha and two beta subunits.

The protein localises to the cytoplasm. It carries out the reaction tRNA(Gly) + glycine + ATP = glycyl-tRNA(Gly) + AMP + diphosphate. The sequence is that of Glycine--tRNA ligase beta subunit from Geobacter metallireducens (strain ATCC 53774 / DSM 7210 / GS-15).